We begin with the raw amino-acid sequence, 246 residues long: Sugar fermentation stimulation protein homolog (246 aa).

This sequence belongs to the SfsA family.

The chain is Sugar fermentation stimulation protein homolog from Prochlorococcus marinus (strain MIT 9312).